The chain runs to 510 residues: Histidine ammonia-lyase (510 aa).

Residues 144–146 constitute a cross-link (5-imidazolinone (Ala-Gly)); sequence ASG. 2,3-didehydroalanine (Ser) is present on serine 145.

The protein belongs to the PAL/histidase family. In terms of processing, contains an active site 4-methylidene-imidazol-5-one (MIO), which is formed autocatalytically by cyclization and dehydration of residues Ala-Ser-Gly.

The protein resides in the cytoplasm. The catalysed reaction is L-histidine = trans-urocanate + NH4(+). The protein operates within amino-acid degradation; L-histidine degradation into L-glutamate; N-formimidoyl-L-glutamate from L-histidine: step 1/3. In Chromobacterium violaceum (strain ATCC 12472 / DSM 30191 / JCM 1249 / CCUG 213 / NBRC 12614 / NCIMB 9131 / NCTC 9757 / MK), this protein is Histidine ammonia-lyase.